Consider the following 1234-residue polypeptide: 1-phosphatidylinositol 4,5-bisphosphate phosphodiesterase beta-3 (1234 aa).

A2 bears the N-acetylalanine mark. A PI-PLC X-box domain is found at 318–468 (DMTQPLSAYF…LMGRILVKNK (151 aa)). Residues H332 and H379 contribute to the active site. The disordered stretch occupies residues 467 to 587 (NKKRHRPSAG…GTASSEVNAT (121 aa)). A phosphoserine mark is found at S474, S490, S495, and S537. The segment covering 488–515 (EQSNSALSESSAATEPSSPQLGSPSSDS) has biased composition (low complexity). The span at 555–567 (REDEEEDEEEEEQ) shows a compositional bias: acidic residues. Over residues 576–587 (DEGTASSEVNAT) the composition is skewed to polar residues. The 117-residue stretch at 590–706 (MSTLVNYIEP…GYLLKPEFMR (117 aa)) folds into the PI-PLC Y-box domain. The region spanning 707 to 835 (RPDKSFDPFT…RNEANQPLCL (129 aa)) is the C2 domain. A compositionally biased stretch (polar residues) spans 887–908 (AGQETCQDTQSQQLGSQPSSNP). Residues 887–937 (AGQETCQDTQSQQLGSQPSSNPTPSPLDASPRRPPGPTTSPASTSLSSPGQ) form a disordered region. The span at 925-936 (TSPASTSLSSPG) shows a compositional bias: low complexity. Phosphoserine is present on residues S926 and S1105. The segment at 1198–1234 (GLGDGPLVACASNGHAPGSSGHLSGADSESQEENTQL) is disordered. The interaction with SHANK2 stretch occupies residues 1231 to 1234 (NTQL).

In terms of assembly, interacts with SHANK2. Interacts with LPAR2. Ca(2+) is required as a cofactor.

It is found in the cytoplasm. The protein resides in the membrane. The protein localises to the nucleus. It catalyses the reaction a 1,2-diacyl-sn-glycero-3-phospho-(1D-myo-inositol-4,5-bisphosphate) + H2O = 1D-myo-inositol 1,4,5-trisphosphate + a 1,2-diacyl-sn-glycerol + H(+). It carries out the reaction a 1,2-diacyl-sn-glycero-3-phospho-(1D-myo-inositol) + H2O = 1D-myo-inositol 1-phosphate + a 1,2-diacyl-sn-glycerol + H(+). Activated by G(q)/G(11) G alpha proteins in response to ligand-binding to G protein-coupled receptors. Functionally, catalyzes the production of the second messenger molecules diacylglycerol (DAG) and inositol 1,4,5-trisphosphate (IP3). Key transducer of G protein-coupled receptor signaling: activated by G(q)/G(11) G alpha proteins downstream of G protein-coupled receptors activation. In neutrophils, participates in a phospholipase C-activating N-formyl peptide-activated GPCR (G protein-coupled receptor) signaling pathway by promoting RASGRP4 activation by DAG, to promote neutrophil functional responses. The polypeptide is 1-phosphatidylinositol 4,5-bisphosphate phosphodiesterase beta-3 (Homo sapiens (Human)).